The sequence spans 109 residues: Insulin (109 aa).

The first 24 residues, 1–24 (MAPWMHLLTVLALLALWGPNSVQA), serve as a signal peptide directing secretion. Cystine bridges form between Cys31-Cys93, Cys43-Cys106, and Cys92-Cys97. The propeptide at 56-84 (ELEDLQVEQAELGLEAGGLQPSALEMILQ) is c peptide.

The protein belongs to the insulin family. In terms of assembly, heterodimer of a B chain and an A chain linked by two disulfide bonds.

It localises to the secreted. Its function is as follows. Insulin decreases blood glucose concentration. It increases cell permeability to monosaccharides, amino acids and fatty acids. It accelerates glycolysis, the pentose phosphate cycle, and glycogen synthesis in liver. In Octodon degus (Degu), this protein is Insulin (INS).